Here is a 43-residue protein sequence, read N- to C-terminus: Potassium channel toxin gamma-KTx 3.3 (43 aa).

Intrachain disulfides connect Cys5-Cys23, Cys11-Cys34, Cys20-Cys39, and Cys24-Cys41.

The protein belongs to the ergtoxin family. Gamma-KTx 3 subfamily. As to expression, expressed by the venom gland.

It is found in the secreted. Functionally, blocks Kv11/ERG potassium channels. The protein is Potassium channel toxin gamma-KTx 3.3 of Centruroides sculpturatus (Arizona bark scorpion).